The chain runs to 229 residues: DNA repair protein RecO (229 aa).

The protein belongs to the RecO family.

Functionally, involved in DNA repair and RecF pathway recombination. In Legionella pneumophila (strain Corby), this protein is DNA repair protein RecO.